A 176-amino-acid chain; its full sequence is Small ribosomal subunit protein bS6 (176 aa).

The segment at 97-176 (DQYTPNDSPP…VEPVDTTSEE (80 aa)) is disordered. Residues 140-160 (AVETVEPPAEPAEPVEAVETV) show a composition bias toward low complexity. A compositionally biased stretch (acidic residues) spans 161–176 (DTTEETVEPVDTTSEE).

The protein belongs to the bacterial ribosomal protein bS6 family.

Its function is as follows. Binds together with bS18 to 16S ribosomal RNA. The chain is Small ribosomal subunit protein bS6 from Gloeothece citriformis (strain PCC 7424) (Cyanothece sp. (strain PCC 7424)).